A 205-amino-acid chain; its full sequence is GTP cyclohydrolase 1 (205 aa).

Residues cysteine 94, histidine 97, and cysteine 165 each coordinate Zn(2+).

The protein belongs to the GTP cyclohydrolase I family. In terms of assembly, toroid-shaped homodecamer, composed of two pentamers of five dimers.

It carries out the reaction GTP + H2O = 7,8-dihydroneopterin 3'-triphosphate + formate + H(+). Its pathway is cofactor biosynthesis; 7,8-dihydroneopterin triphosphate biosynthesis; 7,8-dihydroneopterin triphosphate from GTP: step 1/1. The protein is GTP cyclohydrolase 1 of Sinorhizobium medicae (strain WSM419) (Ensifer medicae).